A 221-amino-acid polypeptide reads, in one-letter code: GTP cyclohydrolase III (221 aa).

The protein belongs to the archaeal-type GTP cyclohydrolase family.

The enzyme catalyses GTP + 3 H2O = 2-amino-5-formylamino-6-(5-phospho-D-ribosylamino)pyrimidin-4(3H)-one + 2 phosphate + 2 H(+). Its function is as follows. Catalyzes the formation of 2-amino-5-formylamino-6-ribofuranosylamino-4(3H)-pyrimidinone ribonucleotide monophosphate and inorganic phosphate from GTP. Also has an independent pyrophosphate phosphohydrolase activity. The polypeptide is GTP cyclohydrolase III (Pyrobaculum arsenaticum (strain DSM 13514 / JCM 11321 / PZ6)).